Reading from the N-terminus, the 195-residue chain is 3-isopropylmalate dehydratase small subunit (195 aa).

Belongs to the LeuD family. LeuD type 1 subfamily. In terms of assembly, heterodimer of LeuC and LeuD.

The catalysed reaction is (2R,3S)-3-isopropylmalate = (2S)-2-isopropylmalate. It participates in amino-acid biosynthesis; L-leucine biosynthesis; L-leucine from 3-methyl-2-oxobutanoate: step 2/4. Its function is as follows. Catalyzes the isomerization between 2-isopropylmalate and 3-isopropylmalate, via the formation of 2-isopropylmaleate. This Karelsulcia muelleri (strain GWSS) (Sulcia muelleri) protein is 3-isopropylmalate dehydratase small subunit.